The primary structure comprises 500 residues: NADH-quinone oxidoreductase subunit N (500 aa).

14 consecutive transmembrane segments (helical) span residues 6–26, 40–60, 69–89, 106–125, 129–151, 164–184, 207–227, 239–259, 276–296, 302–322, 337–357, 380–400, 417–437, and 464–484; these read SWIA…IALV, ALTL…ALGG, MVVV…ALMI, GGEF…VMIS, FLVL…ALRR, FVLG…LYGA, LVFG…AVPF, PTAV…AMTI, MLAL…VAQT, LAFS…AGVV, MFYA…ILLL, YAGV…LVGF, SYLV…FYYL, and IVLA…SSLM.

It belongs to the complex I subunit 2 family. In terms of assembly, NDH-1 is composed of 14 different subunits. Subunits NuoA, H, J, K, L, M, N constitute the membrane sector of the complex.

It is found in the cell inner membrane. It catalyses the reaction a quinone + NADH + 5 H(+)(in) = a quinol + NAD(+) + 4 H(+)(out). In terms of biological role, NDH-1 shuttles electrons from NADH, via FMN and iron-sulfur (Fe-S) centers, to quinones in the respiratory chain. The immediate electron acceptor for the enzyme in this species is believed to be ubiquinone. Couples the redox reaction to proton translocation (for every two electrons transferred, four hydrogen ions are translocated across the cytoplasmic membrane), and thus conserves the redox energy in a proton gradient. The polypeptide is NADH-quinone oxidoreductase subunit N (Polaromonas naphthalenivorans (strain CJ2)).